The following is a 270-amino-acid chain: Proteasome inhibitor PI31 subunit (270 aa).

Ala2 carries the post-translational modification N-acetylalanine. The tract at residues 2–150 (AGLEVLFASA…PIHEQWEKAN (149 aa)) is important for homodimerization and interaction with FBXO7. Ser152 is subject to Phosphoserine. At Arg204 the chain carries Omega-N-methylarginine. Position 218 is an asymmetric dimethylarginine (Arg218). Residues 220-270 (LIDPSSGLPNRLPPGAVPPGARFDPFGPIGTSPSGPNPDHLPPPGYDDMYL) form a disordered region. Position 230 is an omega-N-methylarginine (Arg230). Ser251 bears the Phosphoserine mark. Over residues 254–264 (GPNPDHLPPPG) the composition is skewed to pro residues.

Belongs to the proteasome inhibitor PI31 family. In terms of assembly, monomer and homodimer. Interacts with FBXO7.

Its subcellular location is the cytoplasm. The protein resides in the endoplasmic reticulum. Plays an important role in control of proteasome function. Inhibits the hydrolysis of protein and peptide substrates by the 20S proteasome. Also inhibits the activation of the proteasome by the proteasome regulatory proteins PA700 and PA28. In Bos taurus (Bovine), this protein is Proteasome inhibitor PI31 subunit (PSMF1).